Consider the following 303-residue polypeptide: MNSIYRLSQLKQLEAESIHIFRDAISQFENPVLLYSIGKDSSVLVHLAKKAFYPGRLPFKLLHIDSTFKFREMIEFRDRFVQENDLDLIVHSNQEGISAGVNPFTYGSRKYTDIMKTQALIQALTAGKYDAVFGGARRDEEKSRAKERIFSFRDKFNQWDPKNQRPELWNIYNGRINPGESVRIFPLSNWTELDIWQYIRLEKIQVVDLYFARPRPIVERDGSLIMADDDRLPLKPGETPQMRTVRFRTLGCYPLTGAIESTARTVEEIVAEMLETRLSERSSRIIDHDGDASMEQKKREGYF.

Belongs to the PAPS reductase family. CysD subfamily. In terms of assembly, heterodimer composed of CysD, the smaller subunit, and CysN.

It catalyses the reaction sulfate + ATP + H(+) = adenosine 5'-phosphosulfate + diphosphate. It participates in sulfur metabolism; hydrogen sulfide biosynthesis; sulfite from sulfate: step 1/3. Functionally, with CysN forms the ATP sulfurylase (ATPS) that catalyzes the adenylation of sulfate producing adenosine 5'-phosphosulfate (APS) and diphosphate, the first enzymatic step in sulfur assimilation pathway. APS synthesis involves the formation of a high-energy phosphoric-sulfuric acid anhydride bond driven by GTP hydrolysis by CysN coupled to ATP hydrolysis by CysD. The chain is Sulfate adenylyltransferase subunit 2 from Akkermansia muciniphila (strain ATCC BAA-835 / DSM 22959 / JCM 33894 / BCRC 81048 / CCUG 64013 / CIP 107961 / Muc).